We begin with the raw amino-acid sequence, 514 residues long: 2-isopropylmalate synthase (514 aa).

The 264-residue stretch at 5 to 268 folds into the Pyruvate carboxyltransferase domain; sequence LIIFDTTLRD…DVGIDTTQIV (264 aa). Residues Asp-14, His-202, His-204, and Asn-239 each contribute to the Mn(2+) site. Positions 395 to 514 are regulatory domain; sequence KFVSLSQHSE…KDDKLNPQRS (120 aa).

It belongs to the alpha-IPM synthase/homocitrate synthase family. LeuA type 1 subfamily. Homodimer. The cofactor is Mn(2+).

The protein localises to the cytoplasm. It catalyses the reaction 3-methyl-2-oxobutanoate + acetyl-CoA + H2O = (2S)-2-isopropylmalate + CoA + H(+). The protein operates within amino-acid biosynthesis; L-leucine biosynthesis; L-leucine from 3-methyl-2-oxobutanoate: step 1/4. Catalyzes the condensation of the acetyl group of acetyl-CoA with 3-methyl-2-oxobutanoate (2-ketoisovalerate) to form 3-carboxy-3-hydroxy-4-methylpentanoate (2-isopropylmalate). In Burkholderia multivorans (strain ATCC 17616 / 249), this protein is 2-isopropylmalate synthase.